The sequence spans 196 residues: GTP cyclohydrolase-2 (196 aa).

Residue arginine 49–glutamate 53 coordinates GTP. 3 residues coordinate Zn(2+): cysteine 54, cysteine 65, and cysteine 67. Residues glutamine 70, glutamate 92–arginine 94, and threonine 114 contribute to the GTP site. Catalysis depends on aspartate 126, which acts as the Proton acceptor. Arginine 128 serves as the catalytic Nucleophile. GTP-binding residues include threonine 149 and lysine 154.

The protein belongs to the GTP cyclohydrolase II family. Homodimer. Zn(2+) serves as cofactor.

It catalyses the reaction GTP + 4 H2O = 2,5-diamino-6-hydroxy-4-(5-phosphoribosylamino)-pyrimidine + formate + 2 phosphate + 3 H(+). It functions in the pathway cofactor biosynthesis; riboflavin biosynthesis; 5-amino-6-(D-ribitylamino)uracil from GTP: step 1/4. In terms of biological role, catalyzes the conversion of GTP to 2,5-diamino-6-ribosylamino-4(3H)-pyrimidinone 5'-phosphate (DARP), formate and pyrophosphate. The polypeptide is GTP cyclohydrolase-2 (Shigella boydii serotype 18 (strain CDC 3083-94 / BS512)).